Consider the following 70-residue polypeptide: NAD(P)H-quinone oxidoreductase subunit O (70 aa).

It belongs to the complex I NdhO subunit family. As to quaternary structure, NDH-1 can be composed of about 15 different subunits; different subcomplexes with different compositions have been identified which probably have different functions.

The protein resides in the cellular thylakoid membrane. The enzyme catalyses a plastoquinone + NADH + (n+1) H(+)(in) = a plastoquinol + NAD(+) + n H(+)(out). It catalyses the reaction a plastoquinone + NADPH + (n+1) H(+)(in) = a plastoquinol + NADP(+) + n H(+)(out). Functionally, NDH-1 shuttles electrons from an unknown electron donor, via FMN and iron-sulfur (Fe-S) centers, to quinones in the respiratory and/or the photosynthetic chain. The immediate electron acceptor for the enzyme in this species is believed to be plastoquinone. Couples the redox reaction to proton translocation, and thus conserves the redox energy in a proton gradient. Cyanobacterial NDH-1 also plays a role in inorganic carbon-concentration. This is NAD(P)H-quinone oxidoreductase subunit O from Nostoc sp. (strain PCC 7120 / SAG 25.82 / UTEX 2576).